The primary structure comprises 448 residues: C4-dicarboxylate transport protein (448 aa).

9 helical membrane passes run 9 to 29, 59 to 79, 91 to 111, 159 to 179, 203 to 223, 237 to 257, 312 to 332, 345 to 365, and 367 to 387; these read SLYF…HFYP, LIKM…IAGM, VALL…LLVI, AFAN…GFAL, IVNM…AFTI, LIIC…GTIS, GYSF…IFIA, ITLL…TGSG, and IVMA…LALI.

Belongs to the dicarboxylate/amino acid:cation symporter (DAACS) (TC 2.A.23) family.

It localises to the cell inner membrane. Functionally, responsible for the transport of dicarboxylates such as succinate, fumarate, and malate from the periplasm across the membrane. This Acinetobacter baylyi (strain ATCC 33305 / BD413 / ADP1) protein is C4-dicarboxylate transport protein.